Consider the following 484-residue polypeptide: Protein nucleotidyltransferase YdiU (484 aa).

ATP-binding residues include Gly-87, Gly-89, Arg-90, Lys-110, Asp-122, Gly-123, Arg-173, and Arg-180. Residue Asp-249 is the Proton acceptor of the active site. The Mg(2+) site is built by Asn-250 and Asp-259. An ATP-binding site is contributed by Asp-259. Residues 463-484 (EQEKYAELPPPSDRPYRTFCGT) form a disordered region.

The protein belongs to the SELO family. Requires Mg(2+) as cofactor. It depends on Mn(2+) as a cofactor.

The enzyme catalyses L-seryl-[protein] + ATP = 3-O-(5'-adenylyl)-L-seryl-[protein] + diphosphate. The catalysed reaction is L-threonyl-[protein] + ATP = 3-O-(5'-adenylyl)-L-threonyl-[protein] + diphosphate. It catalyses the reaction L-tyrosyl-[protein] + ATP = O-(5'-adenylyl)-L-tyrosyl-[protein] + diphosphate. It carries out the reaction L-histidyl-[protein] + UTP = N(tele)-(5'-uridylyl)-L-histidyl-[protein] + diphosphate. The enzyme catalyses L-seryl-[protein] + UTP = O-(5'-uridylyl)-L-seryl-[protein] + diphosphate. The catalysed reaction is L-tyrosyl-[protein] + UTP = O-(5'-uridylyl)-L-tyrosyl-[protein] + diphosphate. Its function is as follows. Nucleotidyltransferase involved in the post-translational modification of proteins. It can catalyze the addition of adenosine monophosphate (AMP) or uridine monophosphate (UMP) to a protein, resulting in modifications known as AMPylation and UMPylation. This chain is Protein nucleotidyltransferase YdiU, found in Geobacillus kaustophilus (strain HTA426).